The chain runs to 115 residues: MYNKHHKTLKLHIKKGDTVQVLSGNYRKKQGTVLKVFPKTYRAIVEGVHIVSKHKKPTAKNPQGTIEKVEAPIHISNLMLIESATSRPTRIGRKLDEEGKLQRYSKKTGEFIKNG.

Belongs to the universal ribosomal protein uL24 family. In terms of assembly, part of the 50S ribosomal subunit.

Its function is as follows. One of two assembly initiator proteins, it binds directly to the 5'-end of the 23S rRNA, where it nucleates assembly of the 50S subunit. In terms of biological role, one of the proteins that surrounds the polypeptide exit tunnel on the outside of the subunit. This chain is Large ribosomal subunit protein uL24, found in Amoebophilus asiaticus (strain 5a2).